Here is a 665-residue protein sequence, read N- to C-terminus: DNA ligase (665 aa).

NAD(+) is bound by residues 31–35, 80–81, and glutamate 110; these read DQEFD and SL. Lysine 112 serves as the catalytic N6-AMP-lysine intermediate. Arginine 133, glutamate 170, lysine 285, and lysine 309 together coordinate NAD(+). Zn(2+) is bound by residues cysteine 403, cysteine 406, cysteine 421, and cysteine 427. In terms of domain architecture, BRCT spans 587-665; it reads EHTDKLAGKS…SEEEFLQMIE (79 aa).

This sequence belongs to the NAD-dependent DNA ligase family. LigA subfamily. The cofactor is Mg(2+). It depends on Mn(2+) as a cofactor.

It carries out the reaction NAD(+) + (deoxyribonucleotide)n-3'-hydroxyl + 5'-phospho-(deoxyribonucleotide)m = (deoxyribonucleotide)n+m + AMP + beta-nicotinamide D-nucleotide.. Functionally, DNA ligase that catalyzes the formation of phosphodiester linkages between 5'-phosphoryl and 3'-hydroxyl groups in double-stranded DNA using NAD as a coenzyme and as the energy source for the reaction. It is essential for DNA replication and repair of damaged DNA. This chain is DNA ligase, found in Phocaeicola vulgatus (strain ATCC 8482 / DSM 1447 / JCM 5826 / CCUG 4940 / NBRC 14291 / NCTC 11154) (Bacteroides vulgatus).